The sequence spans 220 residues: Ribose-5-phosphate isomerase A (220 aa).

Substrate-binding positions include 28-31, 81-84, and 94-97; these read TGST, DGAD, and KGGG. Catalysis depends on Glu103, which acts as the Proton acceptor. A substrate-binding site is contributed by Lys121.

Belongs to the ribose 5-phosphate isomerase family. As to quaternary structure, homodimer.

It catalyses the reaction aldehydo-D-ribose 5-phosphate = D-ribulose 5-phosphate. Its pathway is carbohydrate degradation; pentose phosphate pathway; D-ribose 5-phosphate from D-ribulose 5-phosphate (non-oxidative stage): step 1/1. In terms of biological role, catalyzes the reversible conversion of ribose-5-phosphate to ribulose 5-phosphate. The protein is Ribose-5-phosphate isomerase A of Shewanella sp. (strain W3-18-1).